The following is a 185-amino-acid chain: NEDD8-conjugating enzyme UBE2F (185 aa).

A disordered region spans residues 1–29 (MLTLASKLKRDDGVKGSRTSSTTSDSTRR). The interaction with uba3 stretch occupies residues 1–29 (MLTLASKLKRDDGVKGSRTSSTTSDSTRR). The UBC core domain occupies 32–185 (VRDRLLVKEV…VEDYIKRYAR (154 aa)). Cysteine 116 functions as the Glycyl thioester intermediate in the catalytic mechanism.

The protein belongs to the ubiquitin-conjugating enzyme family. UBE2F subfamily.

It catalyses the reaction [E1 NEDD8-activating enzyme]-S-[NEDD8 protein]-yl-L-cysteine + [E2 NEDD8-conjugating enzyme]-L-cysteine = [E1 NEDD8-activating enzyme]-L-cysteine + [E2 NEDD8-conjugating enzyme]-S-[NEDD8-protein]-yl-L-cysteine.. The protein operates within protein modification; protein neddylation. Its function is as follows. Accepts the ubiquitin-like protein NEDD8 from the UBA3-NAE1 E1 complex and catalyzes its covalent attachment to other proteins. Together with the E3 ubiquitin ligase rnf7/rbx2, specifically neddylates cullin-5 (cul5). Does not neddylate cul1, cul2, cul3, cul4a or cul4b. The polypeptide is NEDD8-conjugating enzyme UBE2F (ube2f) (Xenopus tropicalis (Western clawed frog)).